We begin with the raw amino-acid sequence, 197 residues long: HTH-type transcriptional regulator BetI (197 aa).

An HTH tetR-type domain is found at 8 to 68 (PIRRQQLIQA…ATMRHLMNAL (61 aa)). The segment at residues 31 to 50 (SIALIARLAGVSNGIISHYF) is a DNA-binding region (H-T-H motif).

The protein operates within amine and polyamine biosynthesis; betaine biosynthesis via choline pathway [regulation]. In terms of biological role, repressor involved in the biosynthesis of the osmoprotectant glycine betaine. It represses transcription of the choline transporter BetT and the genes of BetAB involved in the synthesis of glycine betaine. The sequence is that of HTH-type transcriptional regulator BetI from Pseudomonas syringae pv. tomato (strain ATCC BAA-871 / DC3000).